The sequence spans 345 residues: Probable translocation protein y4yO (345 aa).

The span at 1 to 22 shows a compositional bias: basic and acidic residues; it reads MSDTSEEKSHGATPKKLSDARK. A disordered region spans residues 1 to 25; sequence MSDTSEEKSHGATPKKLSDARKRGQ. Transmembrane regions (helical) follow at residues 87–107, 151–171, and 189–209; these read LATV…AALL, VLVL…TMVY, and QLIG…LLLQ.

The protein belongs to the type III secretion exporter family.

Its subcellular location is the cell membrane. In terms of biological role, could be involved in the secretion of an unknown factor. The protein is Probable translocation protein y4yO of Sinorhizobium fredii (strain NBRC 101917 / NGR234).